We begin with the raw amino-acid sequence, 342 residues long: Phosphate acyltransferase (342 aa).

Belongs to the PlsX family. In terms of assembly, homodimer. Probably interacts with PlsY.

Its subcellular location is the cytoplasm. The catalysed reaction is a fatty acyl-[ACP] + phosphate = an acyl phosphate + holo-[ACP]. The protein operates within lipid metabolism; phospholipid metabolism. Catalyzes the reversible formation of acyl-phosphate (acyl-PO(4)) from acyl-[acyl-carrier-protein] (acyl-ACP). This enzyme utilizes acyl-ACP as fatty acyl donor, but not acyl-CoA. This chain is Phosphate acyltransferase, found in Shewanella putrefaciens (strain CN-32 / ATCC BAA-453).